The primary structure comprises 290 residues: Arylamine N-acetyltransferase 2 (290 aa).

Cysteine 68 (acyl-thioester intermediate) is an active-site residue. Positions 103 and 104 each coordinate CoA. 106–107 is a binding site for substrate; it reads IH. Catalysis depends on residues histidine 107 and aspartate 122. Position 208 (tyrosine 208) interacts with CoA.

It belongs to the arylamine N-acetyltransferase family.

Its subcellular location is the cytoplasm. It catalyses the reaction an arylamine + acetyl-CoA = an N-acetylarylamine + CoA. It carries out the reaction an N-hydroxyarylamine + acetyl-CoA = an N-acetoxyarylamine + CoA. In terms of biological role, catalyzes the N- or O-acetylation of various arylamine and heterocyclic amine substrates. Participates in the detoxification of a plethora of hydrazine and arylamine drugs. This is Arylamine N-acetyltransferase 2 (Nat2) from Rattus norvegicus (Rat).